A 250-amino-acid polypeptide reads, in one-letter code: Ubiquinone/menaquinone biosynthesis C-methyltransferase UbiE (250 aa).

S-adenosyl-L-methionine contacts are provided by residues Thr73, Asp94, Asn122–Ala123, and Ser139.

Belongs to the class I-like SAM-binding methyltransferase superfamily. MenG/UbiE family.

It catalyses the reaction a 2-demethylmenaquinol + S-adenosyl-L-methionine = a menaquinol + S-adenosyl-L-homocysteine + H(+). The catalysed reaction is a 2-methoxy-6-(all-trans-polyprenyl)benzene-1,4-diol + S-adenosyl-L-methionine = a 5-methoxy-2-methyl-3-(all-trans-polyprenyl)benzene-1,4-diol + S-adenosyl-L-homocysteine + H(+). Its pathway is quinol/quinone metabolism; menaquinone biosynthesis; menaquinol from 1,4-dihydroxy-2-naphthoate: step 2/2. The protein operates within cofactor biosynthesis; ubiquinone biosynthesis. Methyltransferase required for the conversion of demethylmenaquinol (DMKH2) to menaquinol (MKH2) and the conversion of 2-polyprenyl-6-methoxy-1,4-benzoquinol (DDMQH2) to 2-polyprenyl-3-methyl-6-methoxy-1,4-benzoquinol (DMQH2). The sequence is that of Ubiquinone/menaquinone biosynthesis C-methyltransferase UbiE from Francisella tularensis subsp. holarctica (strain FTNF002-00 / FTA).